Reading from the N-terminus, the 444-residue chain is Phosphoglucosamine mutase (444 aa).

Catalysis depends on S101, which acts as the Phosphoserine intermediate. Residues S101, D239, D241, and D243 each contribute to the Mg(2+) site. S101 carries the post-translational modification Phosphoserine.

This sequence belongs to the phosphohexose mutase family. The cofactor is Mg(2+). In terms of processing, activated by phosphorylation.

It catalyses the reaction alpha-D-glucosamine 1-phosphate = D-glucosamine 6-phosphate. Its function is as follows. Catalyzes the conversion of glucosamine-6-phosphate to glucosamine-1-phosphate. In Alcanivorax borkumensis (strain ATCC 700651 / DSM 11573 / NCIMB 13689 / SK2), this protein is Phosphoglucosamine mutase.